The following is a 156-amino-acid chain: Ribosomal RNA large subunit methyltransferase H (156 aa).

Residues Leu-73, Gly-104, and 123-128 (ISSMTL) each bind S-adenosyl-L-methionine.

This sequence belongs to the RNA methyltransferase RlmH family. In terms of assembly, homodimer.

It is found in the cytoplasm. It carries out the reaction pseudouridine(1915) in 23S rRNA + S-adenosyl-L-methionine = N(3)-methylpseudouridine(1915) in 23S rRNA + S-adenosyl-L-homocysteine + H(+). Specifically methylates the pseudouridine at position 1915 (m3Psi1915) in 23S rRNA. This chain is Ribosomal RNA large subunit methyltransferase H, found in Burkholderia cenocepacia (strain HI2424).